The primary structure comprises 338 residues: Methionine import ATP-binding protein MetN 2 (338 aa).

The ABC transporter domain occupies 2 to 242 (IQLEGVSVDF…PQHAFTRQLV (241 aa)). 39-46 (GTSGAGKS) contacts ATP.

This sequence belongs to the ABC transporter superfamily. Methionine importer (TC 3.A.1.24) family. As to quaternary structure, the complex is composed of two ATP-binding proteins (MetN), two transmembrane proteins (MetI) and a solute-binding protein (MetQ).

The protein resides in the cell inner membrane. The catalysed reaction is L-methionine(out) + ATP + H2O = L-methionine(in) + ADP + phosphate + H(+). It carries out the reaction D-methionine(out) + ATP + H2O = D-methionine(in) + ADP + phosphate + H(+). Its function is as follows. Part of the ABC transporter complex MetNIQ involved in methionine import. Responsible for energy coupling to the transport system. This Pectobacterium atrosepticum (strain SCRI 1043 / ATCC BAA-672) (Erwinia carotovora subsp. atroseptica) protein is Methionine import ATP-binding protein MetN 2.